We begin with the raw amino-acid sequence, 888 residues long: Aconitate hydratase A (888 aa).

The [4Fe-4S] cluster site is built by C433, C499, and C502.

The protein belongs to the aconitase/IPM isomerase family. In terms of assembly, monomer. It depends on [4Fe-4S] cluster as a cofactor.

The catalysed reaction is citrate = D-threo-isocitrate. It carries out the reaction (2S,3R)-3-hydroxybutane-1,2,3-tricarboxylate = 2-methyl-cis-aconitate + H2O. Its pathway is carbohydrate metabolism; tricarboxylic acid cycle; isocitrate from oxaloacetate: step 2/2. It participates in organic acid metabolism; propanoate degradation. Its function is as follows. Involved in the catabolism of short chain fatty acids (SCFA) via the tricarboxylic acid (TCA)(acetyl degradation route) and probably the 2-methylcitrate cycle I (propionate degradation route). Catalyzes the reversible isomerization of citrate to isocitrate via cis-aconitate. Could catalyze the hydration of 2-methyl-cis-aconitate to yield (2R,3S)-2-methylisocitrate. The apo form of AcnA functions as a RNA-binding regulatory protein. The polypeptide is Aconitate hydratase A (acn) (Streptococcus mutans serotype c (strain ATCC 700610 / UA159)).